We begin with the raw amino-acid sequence, 83 residues long: uncharacterized protein (83 aa).

Belongs to the chlamydial CPn_0711/CT_665/TC_0036 family.

This is an uncharacterized protein from Chlamydia trachomatis serovar D (strain ATCC VR-885 / DSM 19411 / UW-3/Cx).